A 405-amino-acid polypeptide reads, in one-letter code: Plasma serine protease inhibitor (405 aa).

A signal peptide spans 1-19 (MRFFPILCLVLFISHGVAS). The propeptide at 20-24 (RRHSH) is removed in mature form. N-linked (GlcNAc...) asparagine glycosylation occurs at Asn-247.

This sequence belongs to the serpin family. In terms of assembly, forms protease inhibiting heterodimers in extracellular body fluids with serine proteases such as activated protein C/coagulation factor V/F5, acrosin/ACR, chymotrypsinogen B/CTRB1, prothrombin/F2, factor Xa/F10, factor XI/F11, kallikrein/KLKB1, tissue kallikrein, trypsin/PRSS1, prostate specific antigen/KLK3, tissue plasminogen activator/PLAT and urinary plasminogen activator/PLAU. Forms membrane-anchored serine proteases inhibiting heterodimers with TMPRSS7 and TMPRSS11E. Interacts with SEMG2. In terms of processing, N-glycosylated; glycans consist of a mixture of sialylated bi- (including sialyl-Lewis X epitopes), tri- and tetra-antennary complex-type chains; affects the maximal heparin- and thrombomodulin-enhanced rates of thrombin inhibition. O-glycosylated; further modified with 2 sialic acid residues. Proteolytically cleaved at the N-terminus; inhibits slightly the heparin- and thrombomodulin-enhanced rates of thrombin inhibition. Post-translationally, proteolytically cleaved. Inhibition of proteases is accompanied by formation of a stable enzyme-inhibitor complex and by degradation of the serpin to lower molecular weight derivatives. As to expression, not detected in blood plasma (at protein level). Expressed in testis, epididymis, seminal vesicles, prostate and ovaries.

It localises to the secreted. Its subcellular location is the extracellular space. Its activity is regulated as follows. Its inhibitory activity is greatly enhanced in the presence of glycosaminoglycans, heparin, thrombomodulin and phospholipids vesicles. Heparin-dependent serine protease inhibitor acting in body fluids and secretions. Inactivates serine proteases by binding irreversibly to their serine activation site. Involved in the regulation of intravascular and extravascular proteolytic activities. Plays hemostatic roles in the blood plasma. Acts as a procoagulant and pro-inflammatory factor by inhibiting the anticoagulant activated protein C factor as well as the generation of activated protein C factor by the thrombin/thrombomodulin complex. Acts as an anticoagulant factor by inhibiting blood coagulation factors like prothrombin, factor XI, factor Xa, plasma kallikrein and fibrinolytic enzymes such as tissue- and urinary-type plasminogen activators. In seminal plasma, inactivates several serine proteases implicated in the reproductive system. Inhibits the serpin acrosin; indirectly protects component of the male genital tract from being degraded by excessive released acrosin. Inhibits tissue- and urinary-type plasminogen activator, prostate-specific antigen and kallikrein activities; has a control on the sperm motility and fertilization. Inhibits the activated protein C-catalyzed degradation of SEMG1 and SEMG2; regulates the degradation of semenogelin during the process of transfer of spermatozoa from the male reproductive tract into the female tract. In urine, inhibits urinary-type plasminogen activator and kallikrein activities. Inactivates membrane-anchored serine proteases activities such as MPRSS7 and TMPRSS11E. Inhibits urinary-type plasminogen activator-dependent tumor cell invasion and metastasis. May also play a non-inhibitory role in seminal plasma and urine as a hydrophobic hormone carrier by its binding to retinoic acid. The protein is Plasma serine protease inhibitor (Serpina5) of Mus musculus (Mouse).